Consider the following 130-residue polypeptide: Protein NrdI (130 aa).

This sequence belongs to the NrdI family.

Functionally, probably involved in ribonucleotide reductase function. This chain is Protein NrdI, found in Bartonella bacilliformis (strain ATCC 35685 / KC583 / Herrer 020/F12,63).